The following is a 431-amino-acid chain: Serine--tRNA ligase (431 aa).

Residue 236-238 (TAE) participates in L-serine binding. 267–269 (RSE) contributes to the ATP binding site. E290 lines the L-serine pocket. 354-357 (EISS) contacts ATP. S389 provides a ligand contact to L-serine.

It belongs to the class-II aminoacyl-tRNA synthetase family. Type-1 seryl-tRNA synthetase subfamily. As to quaternary structure, homodimer. The tRNA molecule binds across the dimer.

The protein resides in the cytoplasm. It carries out the reaction tRNA(Ser) + L-serine + ATP = L-seryl-tRNA(Ser) + AMP + diphosphate + H(+). It catalyses the reaction tRNA(Sec) + L-serine + ATP = L-seryl-tRNA(Sec) + AMP + diphosphate + H(+). It participates in aminoacyl-tRNA biosynthesis; selenocysteinyl-tRNA(Sec) biosynthesis; L-seryl-tRNA(Sec) from L-serine and tRNA(Sec): step 1/1. Its function is as follows. Catalyzes the attachment of serine to tRNA(Ser). Is also able to aminoacylate tRNA(Sec) with serine, to form the misacylated tRNA L-seryl-tRNA(Sec), which will be further converted into selenocysteinyl-tRNA(Sec). The chain is Serine--tRNA ligase from Herminiimonas arsenicoxydans.